The chain runs to 572 residues: Butyrate--CoA ligase AAE11, peroxisomal (572 aa).

The short motif at 570–572 (SRL) is the Microbody targeting signal element.

It belongs to the ATP-dependent AMP-binding enzyme family. As to expression, expressed in flowers.

The protein localises to the peroxisome. It carries out the reaction a medium-chain fatty acid + ATP + CoA = a medium-chain fatty acyl-CoA + AMP + diphosphate. In terms of biological role, butyrate--CoA ligase that is active in vitro with medium-chain fatty acids, with a preference for hexanoate and octanoate. The polypeptide is Butyrate--CoA ligase AAE11, peroxisomal (AAE11) (Arabidopsis thaliana (Mouse-ear cress)).